The chain runs to 30 residues: KETAAAKFERQHMDPAPAAAXXQNYCNQMM.

Basic and acidic residues predominate over residues 1 to 13 (KETAAAKFERQHM). The segment at 1 to 21 (KETAAAKFERQHMDPAPAAAX) is disordered. Substrate contacts are provided by lysine 7 and arginine 10. Catalysis depends on histidine 12, which acts as the Proton acceptor.

The protein belongs to the pancreatic ribonuclease family. In terms of assembly, monomer. Interacts with and forms tight 1:1 complexes with RNH1. Dimerization of two such complexes may occur. Interaction with RNH1 inhibits this protein. In terms of tissue distribution, pancreas.

It is found in the secreted. It catalyses the reaction an [RNA] containing cytidine + H2O = an [RNA]-3'-cytidine-3'-phosphate + a 5'-hydroxy-ribonucleotide-3'-[RNA].. The enzyme catalyses an [RNA] containing uridine + H2O = an [RNA]-3'-uridine-3'-phosphate + a 5'-hydroxy-ribonucleotide-3'-[RNA].. Endonuclease that catalyzes the cleavage of RNA on the 3' side of pyrimidine nucleotides. Acts on single-stranded and double-stranded RNA. The protein is Ribonuclease pancreatic (RNASE1) of Odocoileus virginianus virginianus (Virginia white-tailed deer).